A 222-amino-acid chain; its full sequence is Peroxiredoxin (222 aa).

A Thioredoxin domain is found at 7 to 163; it reads PRLGEPAPAF…VIRLVDALQT (157 aa). C49 (cysteine sulfenic acid (-SOH) intermediate) is an active-site residue. Position 126 (R126) interacts with substrate. Cysteines 212 and 218 form a disulfide.

The protein belongs to the peroxiredoxin family. Prx6 subfamily. As to quaternary structure, homodecamer. Pentamer of dimers that assemble into a ring structure.

It is found in the cytoplasm. It carries out the reaction a hydroperoxide + [thioredoxin]-dithiol = an alcohol + [thioredoxin]-disulfide + H2O. Its function is as follows. Thiol-specific peroxidase that catalyzes the reduction of hydrogen peroxide and organic hydroperoxides to water and alcohols, respectively. Plays a role in cell protection against oxidative stress by detoxifying peroxides. In Aquifex aeolicus (strain VF5), this protein is Peroxiredoxin.